Reading from the N-terminus, the 402-residue chain is MSKNLILILNCGSSSLKFAVLDPKTGDEKLSGLAEAFNLEDARIKWKLHGEKGNADLGAGAAHSEALTFIANELLSEELKSSIGAIGHRIVHGGEQFTSSVVINDDVVKGIEHAIQFAPLHNPAHLIGIKEAFRIFPELKEKNVAVFDTAFHQTMPEEAFLYALPYKLYKEHGIRRYGAHGTSHLFITSQVAELAGKPVDQTNAIICHLGNGGSVSVVRNGKCIDTSMGLTPLEGLVMGTRSGDIDPAIVFYLYKNLGMSMEQIEDTLVKKSGLLGLTEVTSDCRYAEDNYEDASKPEAKRALDVYSYRLAKYIGAYMAILGDDHLDAIAFTGGIGENSGHVRELALNHLKLFGVKLDVERNLAARFGKSGVITADDSTFKAVVIPTNEELVIAQDTAKLAL.

Asn10 contacts Mg(2+). Lys17 is an ATP binding site. Residue Arg89 coordinates substrate. The active-site Proton donor/acceptor is the Asp148. Residues 208–212 (HLGNG), 283–285 (DCR), and 334–338 (GIGEN) contribute to the ATP site. Residue Glu389 participates in Mg(2+) binding.

Belongs to the acetokinase family. Homodimer. The cofactor is Mg(2+). It depends on Mn(2+) as a cofactor.

The protein resides in the cytoplasm. It catalyses the reaction acetate + ATP = acetyl phosphate + ADP. It participates in metabolic intermediate biosynthesis; acetyl-CoA biosynthesis; acetyl-CoA from acetate: step 1/2. In terms of biological role, catalyzes the formation of acetyl phosphate from acetate and ATP. Can also catalyze the reverse reaction. The chain is Acetate kinase from Actinobacillus pleuropneumoniae serotype 7 (strain AP76).